A 337-amino-acid chain; its full sequence is Aspartate carbamoyltransferase catalytic subunit (337 aa).

Carbamoyl phosphate-binding residues include arginine 57 and threonine 58. Lysine 86 contributes to the L-aspartate binding site. Residues arginine 107, histidine 135, and glutamine 138 each coordinate carbamoyl phosphate. L-aspartate is bound by residues arginine 172 and arginine 234. Carbamoyl phosphate contacts are provided by leucine 274 and proline 275.

The protein belongs to the aspartate/ornithine carbamoyltransferase superfamily. ATCase family. In terms of assembly, heterododecamer (2C3:3R2) of six catalytic PyrB chains organized as two trimers (C3), and six regulatory PyrI chains organized as three dimers (R2).

The enzyme catalyses carbamoyl phosphate + L-aspartate = N-carbamoyl-L-aspartate + phosphate + H(+). It participates in pyrimidine metabolism; UMP biosynthesis via de novo pathway; (S)-dihydroorotate from bicarbonate: step 2/3. Functionally, catalyzes the condensation of carbamoyl phosphate and aspartate to form carbamoyl aspartate and inorganic phosphate, the committed step in the de novo pyrimidine nucleotide biosynthesis pathway. In Saccharophagus degradans (strain 2-40 / ATCC 43961 / DSM 17024), this protein is Aspartate carbamoyltransferase catalytic subunit.